The chain runs to 621 residues: Glutathione-regulated potassium-efflux system protein KefC (621 aa).

Transmembrane regions (helical) follow at residues 4–24, 26–46, 54–74, 90–110, 114–134, 149–169, 178–198, 218–238, 270–290, 294–314, 326–346, and 359–379; these read HTLIQALIYLGAAALIVPIAV, LGLGSVLGYLIAGCIIGPWGL, AILHFAEIGVVLMLFVIGLEL, GALQMVACGVLIGLFCMLLGL, VAELIGMTLALSSTAIAMQAM, FAVLLFQDIAAIPLVAMIPLL, LVAFALSALKVAAALALVVAL, VFSAVALFLVFGFGLLLEEVG, GLLLGLFFIGVGMSIDFGTLV, LRIVILLVGFLAIKMLMLWLI, RWFAVLLGQGSEFAFVVFGAA, and ALTLAVALSMAATPVLLVLLT. Residues 399-518 enclose the RCK N-terminal domain; that stretch reads QPRVIVAGFG…AGVEAPERET (120 aa). A disordered region spans residues 598–621; it reads GWQGTEEGRHTGDIADEPENKPSA.

The protein belongs to the monovalent cation:proton antiporter 2 (CPA2) transporter (TC 2.A.37) family. KefC subfamily. In terms of assembly, homodimer. Interacts with the regulatory subunit KefF.

It localises to the cell inner membrane. Pore-forming subunit of a potassium efflux system that confers protection against electrophiles. Catalyzes K(+)/H(+) antiport. In Klebsiella pneumoniae (strain 342), this protein is Glutathione-regulated potassium-efflux system protein KefC.